Reading from the N-terminus, the 279-residue chain is Shikimate dehydrogenase (NADP(+)) (279 aa).

Residues 16-18 (SRS) and Thr-63 contribute to the shikimate site. Lys-67 acts as the Proton acceptor in catalysis. The shikimate site is built by Asn-88 and Asp-103. NADP(+) contacts are provided by residues 128 to 132 (GAGGA) and Met-219. A shikimate-binding site is contributed by Tyr-221. Gly-243 is a binding site for NADP(+).

This sequence belongs to the shikimate dehydrogenase family. In terms of assembly, homodimer.

It carries out the reaction shikimate + NADP(+) = 3-dehydroshikimate + NADPH + H(+). It participates in metabolic intermediate biosynthesis; chorismate biosynthesis; chorismate from D-erythrose 4-phosphate and phosphoenolpyruvate: step 4/7. In terms of biological role, involved in the biosynthesis of the chorismate, which leads to the biosynthesis of aromatic amino acids. Catalyzes the reversible NADPH linked reduction of 3-dehydroshikimate (DHSA) to yield shikimate (SA). This Aromatoleum aromaticum (strain DSM 19018 / LMG 30748 / EbN1) (Azoarcus sp. (strain EbN1)) protein is Shikimate dehydrogenase (NADP(+)).